A 277-amino-acid polypeptide reads, in one-letter code: Undecaprenyl-diphosphatase (277 aa).

8 consecutive transmembrane segments (helical) span residues 1 to 21, 38 to 58, 93 to 113, 118 to 138, 168 to 188, 191 to 211, 222 to 242, and 256 to 276; these read MDII…FLPV, SSLA…LWFF, LVWY…LFES, LFAG…TILY, AILP…VIGL, EFAA…AFVV, FNAL…YLAI, and IFAY…ITHL.

It belongs to the UppP family.

The protein resides in the cell membrane. It carries out the reaction di-trans,octa-cis-undecaprenyl diphosphate + H2O = di-trans,octa-cis-undecaprenyl phosphate + phosphate + H(+). Catalyzes the dephosphorylation of undecaprenyl diphosphate (UPP). In Methanobrevibacter smithii (strain ATCC 35061 / DSM 861 / OCM 144 / PS), this protein is Undecaprenyl-diphosphatase.